Here is a 464-residue protein sequence, read N- to C-terminus: Capsule biosynthesis protein CapB (464 aa).

Residues 65 to 85 traverse the membrane as a helical segment; the sequence is LIQMIFIIGICTVFLIIYGIW.

The protein localises to the cell membrane. It functions in the pathway capsule biogenesis; capsule polysaccharide biosynthesis. In terms of biological role, essential for the synthesis of the polyglutamate capsule of B.anthracis which is one of the principal virulence factors during anthrax infection. May form a polyglutamyl synthetase complex together with proteins CapA and CapC. This chain is Capsule biosynthesis protein CapB (capB), found in Bacillus anthracis.